The sequence spans 472 residues: Argininosuccinate lyase (472 aa).

Belongs to the lyase 1 family. Argininosuccinate lyase subfamily.

The protein resides in the cytoplasm. It carries out the reaction 2-(N(omega)-L-arginino)succinate = fumarate + L-arginine. The protein operates within amino-acid biosynthesis; L-arginine biosynthesis; L-arginine from L-ornithine and carbamoyl phosphate: step 3/3. The chain is Argininosuccinate lyase from Maricaulis maris (strain MCS10) (Caulobacter maris).